Reading from the N-terminus, the 398-residue chain is Protein RecA (398 aa).

83-90 (GPESSGKT) lines the ATP pocket. The interval 351–398 (AGQKNDKKSKLEEKANAGAGISEASEPDSSAEEDFEEFAPIDIGSLGE) is disordered. Residues 354-365 (KNDKKSKLEEKA) show a composition bias toward basic and acidic residues. The span at 375-389 (SEPDSSAEEDFEEFA) shows a compositional bias: acidic residues.

It belongs to the RecA family.

It localises to the cytoplasm. Can catalyze the hydrolysis of ATP in the presence of single-stranded DNA, the ATP-dependent uptake of single-stranded DNA by duplex DNA, and the ATP-dependent hybridization of homologous single-stranded DNAs. It interacts with LexA causing its activation and leading to its autocatalytic cleavage. The polypeptide is Protein RecA (Ruminococcus albus (strain ATCC 27210 / DSM 20455 / JCM 14654 / NCDO 2250 / 7)).